The sequence spans 455 residues: uncharacterized protein (455 aa).

Positions M1–A24 are cleaved as a signal peptide.

This is an uncharacterized protein from Pseudomonas aeruginosa (strain ATCC 15692 / DSM 22644 / CIP 104116 / JCM 14847 / LMG 12228 / 1C / PRS 101 / PAO1).